The chain runs to 154 residues: SsrA-binding protein (154 aa).

A disordered region spans residues 132 to 154 (KRESIKKRQDKRDMERALKRGAE).

The protein belongs to the SmpB family.

It localises to the cytoplasm. Functionally, required for rescue of stalled ribosomes mediated by trans-translation. Binds to transfer-messenger RNA (tmRNA), required for stable association of tmRNA with ribosomes. tmRNA and SmpB together mimic tRNA shape, replacing the anticodon stem-loop with SmpB. tmRNA is encoded by the ssrA gene; the 2 termini fold to resemble tRNA(Ala) and it encodes a 'tag peptide', a short internal open reading frame. During trans-translation Ala-aminoacylated tmRNA acts like a tRNA, entering the A-site of stalled ribosomes, displacing the stalled mRNA. The ribosome then switches to translate the ORF on the tmRNA; the nascent peptide is terminated with the 'tag peptide' encoded by the tmRNA and targeted for degradation. The ribosome is freed to recommence translation, which seems to be the essential function of trans-translation. In Acaryochloris marina (strain MBIC 11017), this protein is SsrA-binding protein.